The chain runs to 392 residues: Phosphoglycerate kinase (392 aa).

Residues 21–23 (DLN), arginine 36, 59–62 (HLGR), arginine 113, and arginine 146 each bind substrate. ATP contacts are provided by residues lysine 197, glutamate 319, and 345–348 (GGDT).

It belongs to the phosphoglycerate kinase family. Monomer.

It is found in the cytoplasm. The enzyme catalyses (2R)-3-phosphoglycerate + ATP = (2R)-3-phospho-glyceroyl phosphate + ADP. It participates in carbohydrate degradation; glycolysis; pyruvate from D-glyceraldehyde 3-phosphate: step 2/5. This Nitrosococcus oceani (strain ATCC 19707 / BCRC 17464 / JCM 30415 / NCIMB 11848 / C-107) protein is Phosphoglycerate kinase.